We begin with the raw amino-acid sequence, 222 residues long: Chalcone--flavanone isomerase 1 (222 aa).

Thr48, Asn113, and Thr190 together coordinate substrate.

Belongs to the chalcone isomerase family.

It catalyses the reaction a chalcone = a flavanone.. The protein operates within secondary metabolite biosynthesis; flavonoid biosynthesis. Functionally, catalyzes the intramolecular cyclization of bicyclic chalcones into tricyclic (S)-flavanones. Responsible for the isomerization of 4,2',4',6'-tetrahydroxychalcone (also termed chalcone) into naringenin. This chain is Chalcone--flavanone isomerase 1 (CHI1), found in Medicago sativa (Alfalfa).